The following is a 173-amino-acid chain: Thiol-disulfide oxidoreductase ResA (173 aa).

The chain crosses the membrane as a helical; Signal-anchor for type II membrane protein span at residues 10–29 (VIILLILSGAVGFTLYQGYF). The Thioredoxin domain maps to 35 to 173 (MEIGKEAPNF…LEEYLKKITP (139 aa)). Residues cysteine 73 and cysteine 76 are joined by a disulfide bond.

This sequence belongs to the thioredoxin family. ResA subfamily.

The protein localises to the cell membrane. It participates in protein modification; cytochrome c assembly. Functionally, thiol-disulfide oxidoreductase which is required in disulfide reduction during c-type cytochrome synthesis. May accept reducing equivalents from CcdA, leading to breakage of disulfide bonds in apocytochrome c; following this reduction heme can be covalently attached. In Bacillus cereus (strain ATCC 10987 / NRS 248), this protein is Thiol-disulfide oxidoreductase ResA.